Consider the following 293-residue polypeptide: Phosphatidylserine decarboxylase proenzyme (293 aa).

Residues Asp-88, His-144, and Ser-247 each act as charge relay system; for autoendoproteolytic cleavage activity in the active site. Catalysis depends on Ser-247, which acts as the Schiff-base intermediate with substrate; via pyruvic acid; for decarboxylase activity. Ser-247 carries the pyruvic acid (Ser); by autocatalysis modification.

This sequence belongs to the phosphatidylserine decarboxylase family. PSD-B subfamily. Prokaryotic type I sub-subfamily. Heterodimer of a large membrane-associated beta subunit and a small pyruvoyl-containing alpha subunit. Pyruvate is required as a cofactor. Is synthesized initially as an inactive proenzyme. Formation of the active enzyme involves a self-maturation process in which the active site pyruvoyl group is generated from an internal serine residue via an autocatalytic post-translational modification. Two non-identical subunits are generated from the proenzyme in this reaction, and the pyruvate is formed at the N-terminus of the alpha chain, which is derived from the carboxyl end of the proenzyme. The autoendoproteolytic cleavage occurs by a canonical serine protease mechanism, in which the side chain hydroxyl group of the serine supplies its oxygen atom to form the C-terminus of the beta chain, while the remainder of the serine residue undergoes an oxidative deamination to produce ammonia and the pyruvoyl prosthetic group on the alpha chain. During this reaction, the Ser that is part of the protease active site of the proenzyme becomes the pyruvoyl prosthetic group, which constitutes an essential element of the active site of the mature decarboxylase.

It localises to the cell membrane. It catalyses the reaction a 1,2-diacyl-sn-glycero-3-phospho-L-serine + H(+) = a 1,2-diacyl-sn-glycero-3-phosphoethanolamine + CO2. It participates in phospholipid metabolism; phosphatidylethanolamine biosynthesis; phosphatidylethanolamine from CDP-diacylglycerol: step 2/2. Functionally, catalyzes the formation of phosphatidylethanolamine (PtdEtn) from phosphatidylserine (PtdSer). In Xylella fastidiosa (strain 9a5c), this protein is Phosphatidylserine decarboxylase proenzyme.